Here is a 185-residue protein sequence, read N- to C-terminus: uncharacterized protein (185 aa).

This is an uncharacterized protein from Bacillus subtilis (strain 168).